The chain runs to 275 residues: Shikimate dehydrogenase (NADP(+)) (275 aa).

Shikimate-binding positions include 16 to 18 (SKS) and T63. Residue K67 is the Proton acceptor of the active site. The shikimate site is built by N88 and D104. NADP(+)-binding positions include 129 to 133 (GAGGA), 153 to 158 (NRTVAR), and M219. Residue Y221 coordinates shikimate. Position 243 (G243) interacts with NADP(+).

It belongs to the shikimate dehydrogenase family. Homodimer.

The enzyme catalyses shikimate + NADP(+) = 3-dehydroshikimate + NADPH + H(+). The protein operates within metabolic intermediate biosynthesis; chorismate biosynthesis; chorismate from D-erythrose 4-phosphate and phosphoenolpyruvate: step 4/7. In terms of biological role, involved in the biosynthesis of the chorismate, which leads to the biosynthesis of aromatic amino acids. Catalyzes the reversible NADPH linked reduction of 3-dehydroshikimate (DHSA) to yield shikimate (SA). The protein is Shikimate dehydrogenase (NADP(+)) of Marinobacter nauticus (strain ATCC 700491 / DSM 11845 / VT8) (Marinobacter aquaeolei).